The chain runs to 77 residues: Small ribosomal subunit protein uS17c (77 aa).

It belongs to the universal ribosomal protein uS17 family. As to quaternary structure, part of the 30S ribosomal subunit.

Its subcellular location is the plastid. It localises to the chloroplast. In terms of biological role, one of the primary rRNA binding proteins, it binds specifically to the 5'-end of 16S ribosomal RNA. The polypeptide is Small ribosomal subunit protein uS17c (rps17) (Cyanidium caldarium (Red alga)).